The chain runs to 99 residues: uncharacterized protein (99 aa).

Residues 10–29 (ELSVHTGTVTHTIFVYVFLG) form a helical membrane-spanning segment.

Its subcellular location is the membrane. This is an uncharacterized protein from Schizosaccharomyces pombe (strain 972 / ATCC 24843) (Fission yeast).